A 906-amino-acid chain; its full sequence is Alanine--tRNA ligase (906 aa).

4 residues coordinate Zn(2+): His600, His604, Cys703, and His707.

This sequence belongs to the class-II aminoacyl-tRNA synthetase family. In terms of assembly, homodimer. Zn(2+) is required as a cofactor.

Its subcellular location is the cytoplasm. The catalysed reaction is tRNA(Ala) + L-alanine + ATP = L-alanyl-tRNA(Ala) + AMP + diphosphate. In terms of biological role, catalyzes the attachment of alanine to tRNA(Ala) in a two-step reaction: alanine is first activated by ATP to form Ala-AMP and then transferred to the acceptor end of tRNA(Ala). Incorrectly charged aminoacyl-tRNA(Ala) is also edited in situ by the editing domain. This chain is Alanine--tRNA ligase (alaS), found in Archaeoglobus fulgidus (strain ATCC 49558 / DSM 4304 / JCM 9628 / NBRC 100126 / VC-16).